The following is a 339-amino-acid chain: uncharacterized protein (339 aa).

Residue 28–35 (GPINSGKT) coordinates ATP.

Belongs to the archaeal ATPase family.

This is an uncharacterized protein from Pyrococcus abyssi (strain GE5 / Orsay).